The sequence spans 292 residues: uncharacterized protein (292 aa).

Leu-17, Asp-55, Asn-82, and Lys-115 together coordinate NADP(+). Ser-134 serves as the catalytic Proton donor. Tyr-148, Lys-152, and Thr-184 together coordinate NADP(+). Catalysis depends on Tyr-148, which acts as the Proton acceptor. Lys-152 functions as the Lowers pKa of active site Tyr in the catalytic mechanism.

The protein belongs to the short-chain dehydrogenases/reductases (SDR) family.

It localises to the cytoplasm. This is an uncharacterized protein from Schizosaccharomyces pombe (strain 972 / ATCC 24843) (Fission yeast).